Here is a 399-residue protein sequence, read N- to C-terminus: Elongation factor Tu (399 aa).

A tr-type G domain is found at 10–207; that stretch reads KPHLNIGTIG…AVDNYVPEPQ (198 aa). The tract at residues 19-26 is G1; the sequence is GHIDHGKT. Residue 19–26 participates in GTP binding; that stretch reads GHIDHGKT. Residue Thr-26 participates in Mg(2+) binding. A G2 region spans residues 60–64; it reads GITIN. The interval 81-84 is G3; it reads DCPG. GTP is bound by residues 81–85 and 136–139; these read DCPGH and NKVD. Residues 136-139 are G4; that stretch reads NKVD. A G5 region spans residues 174–176; that stretch reads SAL.

The protein belongs to the TRAFAC class translation factor GTPase superfamily. Classic translation factor GTPase family. EF-Tu/EF-1A subfamily. In terms of assembly, monomer.

It is found in the cytoplasm. It catalyses the reaction GTP + H2O = GDP + phosphate + H(+). Its function is as follows. GTP hydrolase that promotes the GTP-dependent binding of aminoacyl-tRNA to the A-site of ribosomes during protein biosynthesis. This chain is Elongation factor Tu, found in Kosmotoga olearia (strain ATCC BAA-1733 / DSM 21960 / TBF 19.5.1).